Consider the following 126-residue polypeptide: Profilin (126 aa).

It belongs to the profilin family. As to quaternary structure, occurs in many kinds of cells as a complex with monomeric actin in a 1:1 ratio.

Its subcellular location is the cytoplasm. It is found in the cytoskeleton. Functionally, binds to actin and affects the structure of the cytoskeleton. At high concentrations, profilin prevents the polymerization of actin, whereas it enhances it at low concentrations. By binding to PIP2, it inhibits the formation of IP3 and DG. This Bombyx mori (Silk moth) protein is Profilin.